Reading from the N-terminus, the 203-residue chain is Proline-rich protein 1 (203 aa).

Positions 1–20 are cleaved as a signal peptide; that stretch reads MMKLGLYLTLLFLSVWTVSG.

Component of the acid-insoluble and acid-soluble organic matrix of calcified layers of the shell (at protein level).

It is found in the secreted. This Lottia gigantea (Giant owl limpet) protein is Proline-rich protein 1.